Here is a 645-residue protein sequence, read N- to C-terminus: Fructose-1,6-bisphosphatase class 3 (645 aa).

Belongs to the FBPase class 3 family. The cofactor is Mn(2+).

The catalysed reaction is beta-D-fructose 1,6-bisphosphate + H2O = beta-D-fructose 6-phosphate + phosphate. It participates in carbohydrate biosynthesis; gluconeogenesis. The polypeptide is Fructose-1,6-bisphosphatase class 3 (Fusobacterium nucleatum subsp. nucleatum (strain ATCC 25586 / DSM 15643 / BCRC 10681 / CIP 101130 / JCM 8532 / KCTC 2640 / LMG 13131 / VPI 4355)).